Reading from the N-terminus, the 343-residue chain is Arginine-hydroxylase NDUFAF5, mitochondrial (343 aa).

Residues 1-29 (MLRRVVLSRLYARLGGPAVSAGRGGRRGV) constitute a mitochondrion transit peptide. The tract at residues 18 to 40 (AVSAGRGGRRGVASSVPPSGSTS) is disordered.

The protein belongs to the methyltransferase superfamily. In terms of assembly, interacts with NDUFAF8, leading to stabilize NDUFAF5. Interacts with NDUFS7. Interacts with PYURF (via TRM112 domain); the interaction is direct and stabilizes NDUFAF5 protein.

The protein localises to the mitochondrion inner membrane. In terms of biological role, arginine hydroxylase that mediates hydroxylation of 'Arg-111' of NDUFS7 and is involved in the assembly of mitochondrial NADH:ubiquinone oxidoreductase complex (complex I, MT-ND1) at early stages. May also have methyltransferase activity. The protein is Arginine-hydroxylase NDUFAF5, mitochondrial of Rattus norvegicus (Rat).